The sequence spans 565 residues: Arginine--tRNA ligase (565 aa).

The short motif at 120–130 is the 'HIGH' region element; sequence PNIAKPFHVGH.

This sequence belongs to the class-I aminoacyl-tRNA synthetase family. Monomer.

The protein resides in the cytoplasm. It carries out the reaction tRNA(Arg) + L-arginine + ATP = L-arginyl-tRNA(Arg) + AMP + diphosphate. The sequence is that of Arginine--tRNA ligase from Clostridium perfringens (strain 13 / Type A).